Consider the following 1052-residue polypeptide: Mediator of RNA polymerase II transcription subunit 5 (1052 aa).

The tract at residues 949-982 is disordered; sequence GGDDEQREQHQQQQPDADQSNQGVVAPTGNTPGN. The segment covering 959–970 has biased composition (low complexity); sequence QQQQPDADQSNQ.

Belongs to the Mediator complex subunit 5 family. As to quaternary structure, component of the Mediator complex.

The protein resides in the nucleus. Component of the Mediator complex, a coactivator involved in the regulated transcription of nearly all RNA polymerase II-dependent genes. Mediator functions as a bridge to convey information from gene-specific regulatory proteins to the basal RNA polymerase II transcription machinery. Mediator is recruited to promoters by direct interactions with regulatory proteins and serves as a scaffold for the assembly of a functional preinitiation complex with RNA polymerase II and the general transcription factors. The chain is Mediator of RNA polymerase II transcription subunit 5 (NUT1) from Coccidioides immitis (strain RS) (Valley fever fungus).